Reading from the N-terminus, the 743-residue chain is Peptide transporter family 1 (743 aa).

The disordered stretch occupies residues 1–28 (MASEITNGKNGQNGKNGQKEESDSQIAP). Over residues 7–16 (NGKNGQNGKN) the composition is skewed to low complexity. Helical transmembrane passes span 74 to 94 (VLFHTFTMLVYIFPLIGALIA), 104 to 124 (ILYLSLVYSLGAMVVSFGAVP), 132 to 152 (AVTVVGLLLIAIGTGGIKPCV), 173 to 193 (FSLFYFAINAGSLISTTFTPI), 207 to 227 (FSLAFGVPAILMIFSVIIFMA), 334 to 354 (VVNPLLILGFLPLFDYIIYPA), 364 to 384 (LQKLTLGLLLAALGFFLSAGL), 597 to 619 (LPQIVVMTAAEVMFSVTGLEFSY), 629 to 649 (VLQACWLLSVAIGNMLVVVIA), and 659 to 679 (GEFTLFASLMLVDMMIFLWLA).

It belongs to the major facilitator superfamily. Proton-dependent oligopeptide transporter (POT/PTR) (TC 2.A.17) family. Expressed in thorax and abdomen of females: apical epithelial membranes of midgut, rectum, and reproductive tract. Also expressed in neuropil of the central nervous system, with elevated expression within the alpha- and beta-lobes of the mushroom bodies.

The protein localises to the membrane. In terms of biological role, important role in absorption of dietary peptides. High-affinity transporter of alanylalanine. Dipeptide transport activity is proton dependent. The protein is Peptide transporter family 1 (yin) of Drosophila melanogaster (Fruit fly).